The primary structure comprises 382 residues: Heme A synthase (382 aa).

8 helical membrane-spanning segments follow: residues 25–45, 112–132, 138–158, 176–196, 211–231, 270–290, 303–323, and 327–347; these read GAVR…VAVG, LLGR…WARG, LLLG…IGWI, LALH…LAAG, VVAG…GLVA, LALV…VAIA, AAAG…GLGI, and LLHV…AVLI. Position 277 (histidine 277) interacts with heme. A heme-binding site is contributed by histidine 338.

It belongs to the COX15/CtaA family. Type 2 subfamily. As to quaternary structure, interacts with CtaB. The cofactor is heme b.

Its subcellular location is the cell membrane. The enzyme catalyses Fe(II)-heme o + 2 A + H2O = Fe(II)-heme a + 2 AH2. The protein operates within porphyrin-containing compound metabolism; heme A biosynthesis; heme A from heme O: step 1/1. Catalyzes the conversion of heme O to heme A by two successive hydroxylations of the methyl group at C8. The first hydroxylation forms heme I, the second hydroxylation results in an unstable dihydroxymethyl group, which spontaneously dehydrates, resulting in the formyl group of heme A. The protein is Heme A synthase of Methylorubrum extorquens (strain PA1) (Methylobacterium extorquens).